The primary structure comprises 150 residues: S-protein homolog 28 (150 aa).

A glycan (N-linked (GlcNAc...) asparagine) is linked at asparagine 122.

The protein belongs to the plant self-incompatibility (S1) protein family.

It is found in the secreted. This chain is S-protein homolog 28, found in Arabidopsis thaliana (Mouse-ear cress).